The chain runs to 459 residues: Vanillin aminotransferase (459 aa).

Residues 115–116 (GS) and aspartate 255 each bind pyridoxal 5'-phosphate. The residue at position 284 (lysine 284) is an N6-(pyridoxal phosphate)lysine. A pyridoxal 5'-phosphate-binding site is contributed by 320–321 (FT). The stretch at 428-459 (LSLEELDELIRIYGKALKDTEKRVEELKSQKK) forms a coiled coil.

This sequence belongs to the class-III pyridoxal-phosphate-dependent aminotransferase family. In terms of tissue distribution, expressed in placental tissue of immature fruit.

The catalysed reaction is vanillin + L-alanine = vanillylamine + pyruvate. It functions in the pathway aromatic compound metabolism; phenylpropanoid biosynthesis. Its function is as follows. Involved in the biosynthesis of capsaicinoids natural products, pungent alkaloids synthesized from phenylpropanoid intermediates in the placental tissue of chili pepper fruit acting as repellant on herbivorous mammals and conferring spiciness to hot peppers. Can transfer an amine from vanillylamine to pyruvate forming vanillin and L-alanine. Can use pyruvate or oxaloacetate, but not 2-oxoglutarate as amino group acceptors. Is able to convert (S)-1-phenylethylamine into acetophenone in vitro. This Capsicum chinense (Scotch bonnet) protein is Vanillin aminotransferase.